An 88-amino-acid chain; its full sequence is MAKEELIELDGIVDEVLPDSRYRVTLDNGVVVGAYASGQMRRHRIRILAGDRVTLELSVYDLTKGRINFRHKDERRSDAAPRASARRR.

Residues 1 to 72 (MAKEELIELD…TKGRINFRHK (72 aa)) form the S1-like domain.

It belongs to the IF-1 family. In terms of assembly, component of the 30S ribosomal translation pre-initiation complex which assembles on the 30S ribosome in the order IF-2 and IF-3, IF-1 and N-formylmethionyl-tRNA(fMet); mRNA recruitment can occur at any time during PIC assembly.

It is found in the cytoplasm. Functionally, one of the essential components for the initiation of protein synthesis. Stabilizes the binding of IF-2 and IF-3 on the 30S subunit to which N-formylmethionyl-tRNA(fMet) subsequently binds. Helps modulate mRNA selection, yielding the 30S pre-initiation complex (PIC). Upon addition of the 50S ribosomal subunit IF-1, IF-2 and IF-3 are released leaving the mature 70S translation initiation complex. The sequence is that of Translation initiation factor IF-1 1 from Burkholderia mallei (strain ATCC 23344).